A 51-amino-acid polypeptide reads, in one-letter code: Sperm protamine P1 (51 aa).

This sequence belongs to the protamine P1 family. In terms of tissue distribution, testis.

It localises to the nucleus. The protein localises to the chromosome. Protamines substitute for histones in the chromatin of sperm during the haploid phase of spermatogenesis. They compact sperm DNA into a highly condensed, stable and inactive complex. This Colobus guereza (Mantled guereza) protein is Sperm protamine P1 (PRM1).